The primary structure comprises 547 residues: (E)-beta-caryophyllene synthase (547 aa).

Mg(2+)-binding residues include Asp-302 and Asp-306. Substrate is bound by residues Asp-302, Asp-306, Arg-443, and Asn-446. The DDXXD motif motif lies at 302–306; that stretch reads DDLYD. Mg(2+) contacts are provided by Asn-446 and Glu-454.

Belongs to the terpene synthase family. As to quaternary structure, monomer. The cofactor is Mg(2+). Requires Mn(2+) as cofactor.

The protein resides in the cytoplasm. It carries out the reaction (2E,6E)-farnesyl diphosphate = (-)-(E)-beta-caryophyllene + diphosphate. The protein operates within secondary metabolite biosynthesis; terpenoid biosynthesis. Component of the volatile terpenes biosynthesis pathways. Sesquiterpene synthase that converts farnesyl diphosphate to (E)-beta-caryophyllene. Involved in indirect defense by producing volatile signals attracting natural enemies of herbivores. The sequence is that of (E)-beta-caryophyllene synthase from Zea mays (Maize).